Here is a 269-residue protein sequence, read N- to C-terminus: Gene 51 glycoprotein (269 aa).

N-linked (GlcNAc...) asparagine; by host glycans are attached at residues N53, N58, N74, and N78. Disordered stretches follow at residues 67 to 87 and 103 to 137; these read LSTSPMHNATSNTSYSQTTPY and MLNSTPNKPLSSTKLTPKSQSSSQSTKTTKQASKN. The segment covering 76–87 has biased composition (low complexity); the sequence is TSNTSYSQTTPY. Residues 103–112 show a composition bias toward polar residues; that stretch reads MLNSTPNKPL. Residues 113 to 136 are compositionally biased toward low complexity; it reads SSTKLTPKSQSSSQSTKTTKQASK. Residues N137, N161, N170, and N191 are each glycosylated (N-linked (GlcNAc...) asparagine; by host).

This Saimiriine herpesvirus 2 (strain 11) (SaHV-2) protein is Gene 51 glycoprotein (51).